The chain runs to 487 residues: Steroid 21-hydroxylase (487 aa).

Heme b contacts are provided by Arg-92 and Lys-117. Residue Arg-228 participates in 17alpha-hydroxyprogesterone binding. Residue Arg-228 coordinates progesterone. Residues His-357, Arg-418, and Cys-420 each coordinate heme b.

Belongs to the cytochrome P450 family. Requires heme b as cofactor.

It is found in the endoplasmic reticulum membrane. The protein resides in the microsome membrane. It catalyses the reaction progesterone + reduced [NADPH--hemoprotein reductase] + O2 = 21-hydroxyprogesterone + oxidized [NADPH--hemoprotein reductase] + H2O + H(+). The catalysed reaction is 17alpha-hydroxyprogesterone + reduced [NADPH--hemoprotein reductase] + O2 = 11-deoxycortisol + oxidized [NADPH--hemoprotein reductase] + H2O + H(+). Functionally, a cytochrome P450 monooxygenase that plays a major role in adrenal steroidogenesis. Catalyzes the hydroxylation at C-21 of progesterone and 17alpha-hydroxyprogesterone to respectively form 11-deoxycorticosterone and 11-deoxycortisol, intermediate metabolites in the biosynthetic pathway of mineralocorticoids and glucocorticoids. Mechanistically, uses molecular oxygen inserting one oxygen atom into a substrate, and reducing the second into a water molecule, with two electrons provided by NADPH via cytochrome P450 reductase (CPR; NADPH-ferrihemoprotein reductase). The protein is Steroid 21-hydroxylase (Cyp21) of Mus musculus (Mouse).